Here is a 457-residue protein sequence, read N- to C-terminus: Siroheme synthase (457 aa).

Positions 1 to 204 (MDHLPIFCQL…NDQKAITETT (204 aa)) are precorrin-2 dehydrogenase /sirohydrochlorin ferrochelatase. NAD(+) is bound by residues 22–23 (DV) and 43–44 (LA). At Ser-128 the chain carries Phosphoserine. The segment at 216 to 457 (GEVVLVGAGP…RDKLNWFSNH (242 aa)) is uroporphyrinogen-III C-methyltransferase. Pro-225 contacts S-adenosyl-L-methionine. Asp-248 serves as the catalytic Proton acceptor. The active-site Proton donor is Lys-270. Residues 301-303 (GGD), Ile-306, 331-332 (TA), Met-382, and Gly-411 each bind S-adenosyl-L-methionine.

In the N-terminal section; belongs to the precorrin-2 dehydrogenase / sirohydrochlorin ferrochelatase family. This sequence in the C-terminal section; belongs to the precorrin methyltransferase family.

The catalysed reaction is uroporphyrinogen III + 2 S-adenosyl-L-methionine = precorrin-2 + 2 S-adenosyl-L-homocysteine + H(+). It carries out the reaction precorrin-2 + NAD(+) = sirohydrochlorin + NADH + 2 H(+). The enzyme catalyses siroheme + 2 H(+) = sirohydrochlorin + Fe(2+). It functions in the pathway cofactor biosynthesis; adenosylcobalamin biosynthesis; precorrin-2 from uroporphyrinogen III: step 1/1. The protein operates within cofactor biosynthesis; adenosylcobalamin biosynthesis; sirohydrochlorin from precorrin-2: step 1/1. Its pathway is porphyrin-containing compound metabolism; siroheme biosynthesis; precorrin-2 from uroporphyrinogen III: step 1/1. It participates in porphyrin-containing compound metabolism; siroheme biosynthesis; siroheme from sirohydrochlorin: step 1/1. It functions in the pathway porphyrin-containing compound metabolism; siroheme biosynthesis; sirohydrochlorin from precorrin-2: step 1/1. Functionally, multifunctional enzyme that catalyzes the SAM-dependent methylations of uroporphyrinogen III at position C-2 and C-7 to form precorrin-2 via precorrin-1. Then it catalyzes the NAD-dependent ring dehydrogenation of precorrin-2 to yield sirohydrochlorin. Finally, it catalyzes the ferrochelation of sirohydrochlorin to yield siroheme. The polypeptide is Siroheme synthase (Escherichia coli O7:K1 (strain IAI39 / ExPEC)).